The sequence spans 101 residues: Small ribosomal subunit protein uS14 (101 aa).

This sequence belongs to the universal ribosomal protein uS14 family. Part of the 30S ribosomal subunit. Contacts proteins S3 and S10.

Its function is as follows. Binds 16S rRNA, required for the assembly of 30S particles and may also be responsible for determining the conformation of the 16S rRNA at the A site. In Paracoccus denitrificans (strain Pd 1222), this protein is Small ribosomal subunit protein uS14.